Reading from the N-terminus, the 199-residue chain is NAD(P)H dehydrogenase (quinone) (199 aa).

Residues 4 to 190 (MLVLYYSAYG…DGARFQGRRV (187 aa)) form the Flavodoxin-like domain. FMN is bound by residues 10-15 (SAYGHM) and 78-80 (TRY). Tyr12 contacts NAD(+). Residue Trp98 participates in substrate binding. Residues 113–119 (STATQYG) and His134 each bind FMN. The segment at 161–181 (YGMTTTADGDGSRQPSAQELD) is disordered. Residues 163–177 (MTTTADGDGSRQPSA) are compositionally biased toward polar residues.

It belongs to the WrbA family. FMN serves as cofactor.

The catalysed reaction is a quinone + NADH + H(+) = a quinol + NAD(+). The enzyme catalyses a quinone + NADPH + H(+) = a quinol + NADP(+). The chain is NAD(P)H dehydrogenase (quinone) from Brucella canis (strain ATCC 23365 / NCTC 10854 / RM-666).